The chain runs to 493 residues: UDP-N-acetylmuramoyl-L-alanyl-D-glutamate--2,6-diaminopimelate ligase (493 aa).

The UDP-N-acetyl-alpha-D-muramoyl-L-alanyl-D-glutamate site is built by Leu-30 and Ser-32. Residue 117 to 123 (GTNGKTT) coordinates ATP. UDP-N-acetyl-alpha-D-muramoyl-L-alanyl-D-glutamate is bound by residues Asn-158, 159–160 (TT), Ser-186, Gln-192, and Arg-194. The residue at position 226 (Lys-226) is an N6-carboxylysine. Residues Arg-388, 412–415 (DNPR), Gly-463, and Glu-467 contribute to the meso-2,6-diaminopimelate site. The Meso-diaminopimelate recognition motif motif lies at 412 to 415 (DNPR).

This sequence belongs to the MurCDEF family. MurE subfamily. Requires Mg(2+) as cofactor. In terms of processing, carboxylation is probably crucial for Mg(2+) binding and, consequently, for the gamma-phosphate positioning of ATP.

Its subcellular location is the cytoplasm. It catalyses the reaction UDP-N-acetyl-alpha-D-muramoyl-L-alanyl-D-glutamate + meso-2,6-diaminopimelate + ATP = UDP-N-acetyl-alpha-D-muramoyl-L-alanyl-gamma-D-glutamyl-meso-2,6-diaminopimelate + ADP + phosphate + H(+). Its pathway is cell wall biogenesis; peptidoglycan biosynthesis. Catalyzes the addition of meso-diaminopimelic acid to the nucleotide precursor UDP-N-acetylmuramoyl-L-alanyl-D-glutamate (UMAG) in the biosynthesis of bacterial cell-wall peptidoglycan. This Vibrio parahaemolyticus serotype O3:K6 (strain RIMD 2210633) protein is UDP-N-acetylmuramoyl-L-alanyl-D-glutamate--2,6-diaminopimelate ligase.